A 552-amino-acid chain; its full sequence is Lon protease 2 (552 aa).

97–104 (GPPGVGKT) lines the ATP pocket. Positions 349–535 (EPQVGIVNGL…QEVLDEILVN (187 aa)) constitute a Lon proteolytic domain. Catalysis depends on residues Ser-445 and Lys-488.

This sequence belongs to the peptidase S16 family. Homohexamer. Organized in a ring with a central cavity.

It localises to the cytoplasm. The catalysed reaction is Hydrolysis of proteins in presence of ATP.. ATP-dependent serine protease that mediates the selective degradation of mutant and abnormal proteins as well as certain short-lived regulatory proteins. Required for cellular homeostasis and for survival from DNA damage and developmental changes induced by stress. Degrades polypeptides processively to yield small peptide fragments that are 5 to 10 amino acids long. Binds to DNA in a double-stranded, site-specific manner. This chain is Lon protease 2 (lon2), found in Bacillus subtilis (strain 168).